We begin with the raw amino-acid sequence, 87 residues long: Developmentally-regulated ectodermal protein (87 aa).

The first 16 residues, 1–16, serve as a signal peptide directing secretion; the sequence is MKRLLVLTLVSAILMA.

The protein is Developmentally-regulated ectodermal protein of Tripneustes gratilla (Hawaian sea urchin).